The sequence spans 370 residues: 3,5-dihydroxyphenylacetyl-CoA synthase (370 aa).

Residue cysteine 158 is part of the active site.

This sequence belongs to the thiolase-like superfamily. Chalcone/stilbene synthases family.

The catalysed reaction is 4 malonyl-CoA + 4 H(+) = (3,5-dihydroxyphenyl)acetyl-CoA + 4 CO2 + 3 CoA + H2O. Its pathway is antibiotic biosynthesis; vancomycin biosynthesis. In terms of biological role, involved in the biosynthesis of the nonproteinogenic amino acid monomer (S)-3,5-dihydroxyphenylglycine (Dpg) responsible of the production of vancomycin and teicoplanin antibiotics. Catalyzes the Claisen condensation of four molecules of malonyl-CoA to yield 3,5-dihydroxyphenylacetyl-CoA (DPA-CoA) and three free coenzyme A (CoA). DpgA requires the presence of the dehydratases DpgB and DpgD to facilitate the aromatization of the DPA-S-DgpA or DPA-S-CoA intermediate. In Amycolatopsis orientalis (Nocardia orientalis), this protein is 3,5-dihydroxyphenylacetyl-CoA synthase (dpgA).